A 57-amino-acid polypeptide reads, in one-letter code: Small ribosomal subunit protein bS21 (57 aa).

It belongs to the bacterial ribosomal protein bS21 family.

The sequence is that of Small ribosomal subunit protein bS21 from Bacillus anthracis (strain A0248).